A 631-amino-acid chain; its full sequence is Chaperone protein DnaK (631 aa).

Threonine 197 is subject to Phosphothreonine; by autocatalysis. Residues 599–631 (AQSDAGAAGSASEENTTSNEKVVDADFEDVEKK) are disordered. Low complexity predominate over residues 603–612 (AGAAGSASEE).

It belongs to the heat shock protein 70 family.

In terms of biological role, acts as a chaperone. The sequence is that of Chaperone protein DnaK from Rickettsia bellii (strain RML369-C).